A 122-amino-acid chain; its full sequence is Large ribosomal subunit protein uL14 (122 aa).

Belongs to the universal ribosomal protein uL14 family. As to quaternary structure, part of the 50S ribosomal subunit. Forms a cluster with proteins L3 and L19. In the 70S ribosome, L14 and L19 interact and together make contacts with the 16S rRNA in bridges B5 and B8.

Its function is as follows. Binds to 23S rRNA. Forms part of two intersubunit bridges in the 70S ribosome. The protein is Large ribosomal subunit protein uL14 of Methylorubrum populi (strain ATCC BAA-705 / NCIMB 13946 / BJ001) (Methylobacterium populi).